We begin with the raw amino-acid sequence, 1104 residues long: General transcription factor II-I repeat domain-containing protein 1 (1104 aa).

Glycyl lysine isopeptide (Lys-Gly) (interchain with G-Cter in SUMO2) cross-links involve residues K27, K184, K212, K225, K238, K271, K337, K436, K439, and K443. The GTF2I-like 1 repeat unit spans residues 119-213; the sequence is LEQCSDVYLL…PDDGGQDTKA (95 aa). A GTF2I-like 2 repeat occupies 342–436; that stretch reads IKEMEDINTL…FDERIFTGNK (95 aa). Position 448 is a phosphoserine (S448). The tract at residues 509–559 is disordered; that stretch reads SDPSPTSEEMTDSLPGHLPSEDSGYGMEMPADKGPSEEPWSEERPAEESPG. Basic and acidic residues predominate over residues 538 to 555; that stretch reads PADKGPSEEPWSEERPAE. A GTF2I-like 3 repeat occupies 556-650; it reads ESPGDVIRPL…ELLTDGVKEP (95 aa). Residues K567, K579, K588, K622, K638, K669, K709, K717, K757, K759, and K772 each participate in a glycyl lysine isopeptide (Lys-Gly) (interchain with G-Cter in SUMO2) cross-link. One copy of the GTF2I-like 4 repeat lies at 681–775; it reads LSRIDIANTL…FQGLIPKPET (95 aa). The segment at 783-802 is disordered; the sequence is EAGKTTRPRRLQQDTWQPDE. The stretch at 805–899 is one GTF2I-like 5 repeat; the sequence is ANRLGEKVIL…LQPFAEVCND (95 aa). Glycyl lysine isopeptide (Lys-Gly) (interchain with G-Cter in SUMO2) cross-links involve residues K841 and K901. The stretch at 908 to 1002 is one GTF2I-like 6 repeat; sequence SNKLGKKVIL…LQPFGDVCNN (95 aa). Disordered stretches follow at residues 1001–1044 and 1058–1104; these read NNAK…VAST and LHPN…LPTR. Residues 1012 to 1019 carry the Nuclear localization signal motif; it reads PKRKRKRV. Low complexity predominate over residues 1021-1043; the sequence is EGNSVSSSSSSSSSSSNPESVAS.

It belongs to the TFII-I family. Interacts with the retinoblastoma protein (RB1) via its C-terminus. Widely expressed.

The protein localises to the nucleus. Its function is as follows. May be a transcription regulator involved in cell-cycle progression and skeletal muscle differentiation. May repress GTF2I transcriptional functions, by preventing its nuclear residency, or by inhibiting its transcriptional activation. May contribute to slow-twitch fiber type specificity during myogenesis and in regenerating muscles. Binds troponin I slow-muscle fiber enhancer (USE B1). Binds specifically and with high affinity to the EFG sequences derived from the early enhancer of HOXC8. This Mus musculus (Mouse) protein is General transcription factor II-I repeat domain-containing protein 1 (Gtf2ird1).